Reading from the N-terminus, the 352-residue chain is Protein MGF 360-16R (352 aa).

It belongs to the asfivirus MGF 360 family.

Functionally, plays a role in virus cell tropism, and may be required for efficient virus replication in macrophages. The chain is Protein MGF 360-16R from African swine fever virus (isolate Tick/South Africa/Pretoriuskop Pr4/1996) (ASFV).